Consider the following 600-residue polypeptide: MRVTTSFPLGTLRDTPSEAEIISHQLLLKAGYIRRVNSGIYAYMPLMLRVVEKISAIIEKELNSIGCTKLLLPQLHPADLWKKSERWEGYTAGEGIMFNLKDRQGKEFGLAPTHEEVITSIASETINSYKQLPQCFYQIQTKFRDEIRPRFGLMRSREFIMKDGYSFHSSENDLASFYEKVGNAYENIFESCGLQTVGVDADSGAIGGASSKEFMVTADAGEDSILFTQSGSYAANIEKAVSLPSQPIPLKDNIAEWLETPNQKTIQEVCDNNNLDPSQIIKVVILLAQFENEFNAPILACVRGDQHINEVKLFNLINKLHHFNLLNLKKIEDKNTIEKNLVDLPLGFIGPDLDNKTIKASSNWEKKWTRIIDHSASDLSKFISGGNKVNFHKVFQEFSFNSKNYLIGDIRNAKKGDKISIDDDEELKEKKGIEIGHIFQLGQKYSEKLNAKFSDKDGQLKNLWMGCYGIGVTRIAQAAIEQNHDQKGICWPIQISPFEVIIIPTNLKDPIQSDLTEQIYNNFLINKIDVLLDDRNDRAGVKFKDAELIGIPFQVIIGRDSINKEVELFCRTNNTKIKISTDKLLETFISESEIMYNKKS.

It belongs to the class-II aminoacyl-tRNA synthetase family. ProS type 1 subfamily. As to quaternary structure, homodimer.

Its subcellular location is the cytoplasm. It catalyses the reaction tRNA(Pro) + L-proline + ATP = L-prolyl-tRNA(Pro) + AMP + diphosphate. Its function is as follows. Catalyzes the attachment of proline to tRNA(Pro) in a two-step reaction: proline is first activated by ATP to form Pro-AMP and then transferred to the acceptor end of tRNA(Pro). As ProRS can inadvertently accommodate and process non-cognate amino acids such as alanine and cysteine, to avoid such errors it has two additional distinct editing activities against alanine. One activity is designated as 'pretransfer' editing and involves the tRNA(Pro)-independent hydrolysis of activated Ala-AMP. The other activity is designated 'posttransfer' editing and involves deacylation of mischarged Ala-tRNA(Pro). The misacylated Cys-tRNA(Pro) is not edited by ProRS. This Prochlorococcus marinus (strain MIT 9301) protein is Proline--tRNA ligase.